A 248-amino-acid chain; its full sequence is 2,3-bisphosphoglycerate-dependent phosphoglycerate mutase (248 aa).

Substrate-binding positions include 8–15 (RHGESEWN), 21–22 (TG), Arg60, 87–90 (ERHY), Lys98, 114–115 (RR), and 183–184 (GN). Residue His9 is the Tele-phosphohistidine intermediate of the active site. Glu87 serves as the catalytic Proton donor/acceptor.

It belongs to the phosphoglycerate mutase family. BPG-dependent PGAM subfamily.

It catalyses the reaction (2R)-2-phosphoglycerate = (2R)-3-phosphoglycerate. The protein operates within carbohydrate degradation; glycolysis; pyruvate from D-glyceraldehyde 3-phosphate: step 3/5. Catalyzes the interconversion of 2-phosphoglycerate and 3-phosphoglycerate. This is 2,3-bisphosphoglycerate-dependent phosphoglycerate mutase from Borrelia hermsii (strain HS1 / DAH).